Here is a 234-residue protein sequence, read N- to C-terminus: MQFEPALQQGRLVKRYKRFLADIKLADGSEMTIHCPNTGSMRNCLFPGEAVWFSTSANPKRKYAYTWELMGTPNGGFIGIHSGSANALAEEAIHSGIIKELTGYDTLSREVKYGDENSRIDILLQGAQKPDCYIEVKSCTLLEDGQGFFPDAVSLRGQKHLRELMHMANLGHRAVLLFVVQHSEIFSVAPAAHIDHEYANLLKKATLSGVEVLAYRCEMSPTEIRLAQACPVRV.

The protein belongs to the SfsA family.

The sequence is that of Sugar fermentation stimulation protein homolog from Shewanella putrefaciens (strain CN-32 / ATCC BAA-453).